We begin with the raw amino-acid sequence, 292 residues long: 4-hydroxy-tetrahydrodipicolinate synthase (292 aa).

Thr50 contacts pyruvate. Tyr139 acts as the Proton donor/acceptor in catalysis. The active-site Schiff-base intermediate with substrate is the Lys167. Ile208 provides a ligand contact to pyruvate.

It belongs to the DapA family. Homotetramer; dimer of dimers.

It localises to the cytoplasm. The catalysed reaction is L-aspartate 4-semialdehyde + pyruvate = (2S,4S)-4-hydroxy-2,3,4,5-tetrahydrodipicolinate + H2O + H(+). It functions in the pathway amino-acid biosynthesis; L-lysine biosynthesis via DAP pathway; (S)-tetrahydrodipicolinate from L-aspartate: step 3/4. Functionally, catalyzes the condensation of (S)-aspartate-beta-semialdehyde [(S)-ASA] and pyruvate to 4-hydroxy-tetrahydrodipicolinate (HTPA). The sequence is that of 4-hydroxy-tetrahydrodipicolinate synthase from Oenococcus oeni (strain ATCC BAA-331 / PSU-1).